A 220-amino-acid polypeptide reads, in one-letter code: Imidazoleglycerol-phosphate dehydratase (220 aa).

Residues Glu-14, 64–72 (HMIHALAKH), 90–94 (HHTTE), Arg-116, and Arg-138 contribute to the substrate site. His-64, His-90, His-91, and Glu-94 together coordinate Mn(2+). The Mn(2+) site is built by His-162, His-186, His-187, and Glu-190. Residues 186-194 (HHRSESAFK) and 214-216 (STK) contribute to the substrate site.

The protein belongs to the imidazoleglycerol-phosphate dehydratase family. Mn(2+) is required as a cofactor.

It carries out the reaction D-erythro-1-(imidazol-4-yl)glycerol 3-phosphate = 3-(imidazol-4-yl)-2-oxopropyl phosphate + H2O. It functions in the pathway amino-acid biosynthesis; L-histidine biosynthesis; L-histidine from 5-phospho-alpha-D-ribose 1-diphosphate: step 6/9. This chain is Imidazoleglycerol-phosphate dehydratase, found in Saccharomyces cerevisiae (strain ATCC 204508 / S288c) (Baker's yeast).